The following is a 497-amino-acid chain: Probable pectinesterase 30 (497 aa).

A signal peptide spans 1–21 (MLVKVFSFFILMIIMVIGVSK). Residues Asn238 and Asn254 are each glycosylated (N-linked (GlcNAc...) asparagine). A substrate-binding site is contributed by Thr263. The active-site Proton donor is the Asp316. A disulfide bridge connects residues Cys330 and Cys350. The active-site Nucleophile is Asp337. Asn385 carries N-linked (GlcNAc...) asparagine glycosylation. Residues Arg403 and Trp405 each contribute to the substrate site.

The protein belongs to the pectinesterase family. As to expression, expressed in siliques.

Its subcellular location is the secreted. The protein resides in the cell wall. The catalysed reaction is [(1-&gt;4)-alpha-D-galacturonosyl methyl ester](n) + n H2O = [(1-&gt;4)-alpha-D-galacturonosyl](n) + n methanol + n H(+). The protein operates within glycan metabolism; pectin degradation; 2-dehydro-3-deoxy-D-gluconate from pectin: step 1/5. In terms of biological role, acts in the modification of cell walls via demethylesterification of cell wall pectin. This is Probable pectinesterase 30 (PME30) from Arabidopsis thaliana (Mouse-ear cress).